We begin with the raw amino-acid sequence, 307 residues long: tRNA(Met) cytidine acetate ligase (307 aa).

ATP is bound by residues 12 to 25 (VVEY…HIYQ), G106, N163, and R188.

This sequence belongs to the TmcAL family.

The protein resides in the cytoplasm. It carries out the reaction cytidine(34) in elongator tRNA(Met) + acetate + ATP = N(4)-acetylcytidine(34) in elongator tRNA(Met) + AMP + diphosphate. Its function is as follows. Catalyzes the formation of N(4)-acetylcytidine (ac(4)C) at the wobble position of elongator tRNA(Met), using acetate and ATP as substrates. First activates an acetate ion to form acetyladenylate (Ac-AMP) and then transfers the acetyl group to tRNA to form ac(4)C34. This chain is tRNA(Met) cytidine acetate ligase, found in Mycoplasmopsis synoviae (strain 53) (Mycoplasma synoviae).